Consider the following 180-residue polypeptide: Flavodoxin 2 (180 aa).

Residues isoleucine 4–alanine 173 form the Flavodoxin-like domain. FMN contacts are provided by residues serine 10–threonine 15, threonine 57, glycine 61, aspartate 99, asparagine 106–leucine 108, and aspartate 155.

FMN serves as cofactor.

Flavodoxins are low-potential electron donors to a number of redox enzymes. NifF is the electron donor to nitrogenase, and is thus implicated in nitrogen fixation. Does not function as an electron donor to nitrite reductase. The protein is Flavodoxin 2 of Azotobacter vinelandii.